Consider the following 168-residue polypeptide: MVKDILARELRVVFCGINPGLSSAGTGFPFAHPANRFWKVIHLAGFTGRQLKPEEAQHLLDFRCGVTKFVDRPTVQANEVKLQEMRSGGHKLIEKIEHYQPAALAILGKQAFEQGFSQRGAQWGKQTMTIGDTQIWVLPNPSGLNRIRTEKLVEAYRELDESLVVDGL.

It belongs to the uracil-DNA glycosylase (UDG) superfamily. TDG/mug family. As to quaternary structure, binds DNA as a monomer.

It is found in the cytoplasm. It carries out the reaction Specifically hydrolyzes mismatched double-stranded DNA and polynucleotides, releasing free uracil.. Excises ethenocytosine and uracil, which can arise by alkylation or deamination of cytosine, respectively, from the corresponding mispairs with guanine in ds-DNA. It is capable of hydrolyzing the carbon-nitrogen bond between the sugar-phosphate backbone of the DNA and the mispaired base. The complementary strand guanine functions in substrate recognition. Required for DNA damage lesion repair in stationary-phase cells. In Citrobacter koseri (strain ATCC BAA-895 / CDC 4225-83 / SGSC4696), this protein is G/U mismatch-specific DNA glycosylase.